The following is a 297-amino-acid chain: Acetyl-coenzyme A carboxylase carboxyl transferase subunit beta (297 aa).

Residues 27–296 enclose the CoA carboxyltransferase N-terminal domain; it reads LWHKCPACEA…PEQAREAAAV (270 aa). Zn(2+) contacts are provided by Cys-31, Cys-34, Cys-50, and Cys-53. A C4-type zinc finger spans residues 31–53; sequence CPACEAVLYRPELEKTLDVCPKC.

This sequence belongs to the AccD/PCCB family. In terms of assembly, acetyl-CoA carboxylase is a heterohexamer composed of biotin carboxyl carrier protein (AccB), biotin carboxylase (AccC) and two subunits each of ACCase subunit alpha (AccA) and ACCase subunit beta (AccD). Zn(2+) is required as a cofactor.

It is found in the cytoplasm. The enzyme catalyses N(6)-carboxybiotinyl-L-lysyl-[protein] + acetyl-CoA = N(6)-biotinyl-L-lysyl-[protein] + malonyl-CoA. It functions in the pathway lipid metabolism; malonyl-CoA biosynthesis; malonyl-CoA from acetyl-CoA: step 1/1. In terms of biological role, component of the acetyl coenzyme A carboxylase (ACC) complex. Biotin carboxylase (BC) catalyzes the carboxylation of biotin on its carrier protein (BCCP) and then the CO(2) group is transferred by the transcarboxylase to acetyl-CoA to form malonyl-CoA. In Pseudomonas putida (strain W619), this protein is Acetyl-coenzyme A carboxylase carboxyl transferase subunit beta.